Here is a 375-residue protein sequence, read N- to C-terminus: Probable sugar phosphate/phosphate translocator At3g17430 (375 aa).

The next 10 membrane-spanning stretches (helical) occupy residues 9-29, 43-63, 76-96, 106-126, 140-160, 163-183, 193-213, 229-249, 257-276, and 280-302; these read LVLTYIYLLIYIILSSGVILY, LPITLTMIHMGFAGFVAFLLI, FEIYATCVVPISAFFASSLWF, VAFIQMLKALMPVATFIMAVV, MLLVSVGVVISSYGEIHFNIV, VYQVTGIFAEALRLVLTQVLL, ITSLYYIAPCSFVFLALPWYV, WIFFSNALCALALNFSIFLVI, IRVAGVLKDWILIALSTVIF, and TITGLNITGYAIALCGVVMYNYI. Residues 328–348 form a disordered region; it reads EKKSSDKFNPNDSVEIPRVGG.

This sequence belongs to the TPT transporter family. TPT (TC 2.A.7.9) subfamily.

It is found in the membrane. This Arabidopsis thaliana (Mouse-ear cress) protein is Probable sugar phosphate/phosphate translocator At3g17430.